A 123-amino-acid polypeptide reads, in one-letter code: MIQEQTMLDVADNSGARSVMCIKVLGGSHRRYAAIGDIIKITVKEAIPRGKVKKGDVLKAVVVRTKKGVRRPDGSVIRFDGNACVILNNNTEQPIGTRIFGPVTRELRSEKFMKIISLAPEVL.

Belongs to the universal ribosomal protein uL14 family. As to quaternary structure, part of the 50S ribosomal subunit. Forms a cluster with proteins L3 and L19. In the 70S ribosome, L14 and L19 interact and together make contacts with the 16S rRNA in bridges B5 and B8.

Binds to 23S rRNA. Forms part of two intersubunit bridges in the 70S ribosome. The protein is Large ribosomal subunit protein uL14 of Actinobacillus succinogenes (strain ATCC 55618 / DSM 22257 / CCUG 43843 / 130Z).